We begin with the raw amino-acid sequence, 410 residues long: WD repeat-containing protein jip5 (410 aa).

WD repeat units lie at residues 9–48 (PLSADLFAQAIHPSEPIISVGLSTGHVQTFRLPTEEEEEH), 74–113 (RHKGSCRTLTFGIDGEMLYSAGTDGLVKAAKAETGVVENK), 119–160 (AKDG…SKVA), 223–264 (VSST…DQDE), 273–316 (GGGE…VVSE), and 320–357 (DETEGVIGLGFDVEGHMVSGGGQIVKVWHEAADSIGGE). The interval 41–65 (PTEEEEEHSDDEQASVSSSRNGKGH) is disordered. A compositionally biased stretch (acidic residues) spans 43 to 53 (EEEEEHSDDEQ). Residues 354–410 (IGGEKRGFGGDSDDSDDDSDDSDHEPKQGDDSRRKRKKQKGKDRGKGPEIMAFADLD) are disordered. The segment covering 364–376 (DSDDSDDDSDDSD) has biased composition (acidic residues). Over residues 377-386 (HEPKQGDDSR) the composition is skewed to basic and acidic residues.

It belongs to the WD repeat WDR55 family.

It localises to the nucleus. The protein localises to the nucleolus. This is WD repeat-containing protein jip5 (jip5) from Emericella nidulans (strain FGSC A4 / ATCC 38163 / CBS 112.46 / NRRL 194 / M139) (Aspergillus nidulans).